Reading from the N-terminus, the 478-residue chain is Septin-4 (478 aa).

A disordered region spans residues 1-115; it reads MDHSLGWQGN…RSPWGKLDPY (115 aa). Residues Ser28, Ser29, and Ser68 each carry the phosphoserine modification. Residues 84-93 are compositionally biased toward polar residues; that stretch reads PQPSDSQQYF. Positions 94–108 are enriched in low complexity; that stretch reads SAPAPLSPSSRPRSP. Ser117 and Ser118 each carry phosphoserine. A Septin-type G domain is found at 141–414; it reads KGFDFTLMVA…ENYRAQCIQS (274 aa). Residues 151 to 158 form a G1 motif region; the sequence is GESGLGKS. GTP contacts are provided by residues 151 to 158 and Thr185; that span reads GESGLGKS. Residues 208 to 211 are G3 motif; that stretch reads DTPG. The interval 289–292 is G4 motif; that stretch reads AKAD. Residue 290–298 coordinates GTP; sequence KADTLTPPE. Ser325 is modified (phosphoserine). Positions 348 and 363 each coordinate GTP. The segment at 428 to 449 is disordered; that stretch reads LTRESGTDFPIPAVPPGTDPET. Position 432 is a phosphoserine (Ser432). Thr434 carries the phosphothreonine modification. Residues 447–478 are a coiled coil; it reads PETEKLIREKDEELRRMQEMLHKIQRQMKETH.

Belongs to the TRAFAC class TrmE-Era-EngA-EngB-Septin-like GTPase superfamily. Septin GTPase family. In terms of assembly, septins polymerize into heterooligomeric protein complexes that form filaments, and can associate with cellular membranes, actin filaments and microtubules. GTPase activity is required for filament formation. Interacts with SEPTIN8. Component of a septin core octameric complex consisting of SEPTIN12, SEPTIN7, SEPTIN6 and SEPTIN2 or SEPTIN4 in the order 12-7-6-2-2-6-7-12 or 12-7-6-4-4-6-7-12. Interacts with SEPTIN14 (via C-terminus). Interacts with DYRK1A. Interacts with SLC6A3/DAT and SNCA/alpha-synuclein. Interacts with STX1A; in the striatum. Interacts with XIAP (via BIR3 domain) following the induction of apoptosis. Interacts with AREL1 (via HECT domain); in the cytoplasm following induction of apoptosis. Interacts with DPYSL5. Post-translationally, phosphorylated by DYRK1A. In terms of processing, ubiquitinated by AREL1. May be phosphorylated. Expressed in the cerebral cortex, striatum, midbrain, cerebellum and spinal cord (at protein level). Expressed in the substantia nigra pars compacta, ventral tegmental area, projection fiber bundles and in axon terminals surrounding striatal neurons (at protein level). Expressed in hair follicle stem cells (at protein level). Expressed in small intestinal crypts; abundantly expressed at the crypt base (at protein level). Widely expressed in the brain and to a lesser extent in the testis, lung and liver. In terms of tissue distribution, highly expressed in the brain and testis and, to a lesser extent in the heart, lung and kidney. In the brain, abundant in areas of high cell density, particularly in the stria terminalis. Expressed in the entorhinal, temporal and visual cortices and the hippocampus of the brain where is colocalizes with DYRK1A in postnatal day 1 and adult mice. Expressed and extensively colocalizes with DYRK1A in apical dendrites of pyramidal cells. As to expression, predominantly expressed in embryonic brain and dorsal root ganglion neurons. Expressed in LGR5-positive intestinal stem cells and lysozyme-positive Paneth cells (at protein level). Expressed in the brain and testis.

The protein localises to the cytoplasm. It is found in the cell projection. Its subcellular location is the cilium. It localises to the flagellum. The protein resides in the cytoplasmic vesicle. The protein localises to the secretory vesicle. It is found in the axon. Its subcellular location is the dendrite. It localises to the perikaryon. The protein resides in the synapse. The protein localises to the mitochondrion. It is found in the cytosol. Functionally, filament-forming cytoskeletal GTPase. Pro-apoptotic protein involved in LGR5-positive intestinal stem cell and Paneth cell expansion in the intestines, via its interaction with XIAP. May also play a role in the regulation of cell fate in the intestine. Positive regulator of apoptosis involved in hematopoietic stem cell homeostasis; via its interaction with XIAP. Negative regulator of repair and hair follicle regeneration in response to injury, due to inhibition of hair follicle stem cell proliferation, potentially via its interaction with XIAP. Plays an important role in male fertility and sperm motility. During spermiogenesis, essential for the establishment of the annulus (a fibrous ring structure connecting the midpiece and the principal piece of the sperm flagellum) which is a requisite for the structural and mechanical integrity of the sperm. Involved in the migration of cortical neurons and the formation of neuron leading processes during embryonic development. Required for dopaminergic metabolism in presynaptic autoreceptors; potentially via activity as a presynaptic scaffold protein. The sequence is that of Septin-4 from Mus musculus (Mouse).